Here is a 123-residue protein sequence, read N- to C-terminus: MEYSTFGKHIIVDLWGVDFSLLDDMHFLEYHLVTAADYSGAHVLNVSKKEFQPYGVTVLVLLSESHLSIHTYPEQNFAAIDCYTCGTTVEPQIAIDYIVNILKPERMHIKRLIRGIGEIVTAD.

Serine 65 serves as the catalytic Schiff-base intermediate with substrate; via pyruvic acid. Position 65 is a pyruvic acid (Ser); by autocatalysis (serine 65). Histidine 70 serves as the catalytic Proton acceptor; for processing activity. Cysteine 85 acts as the Proton donor; for catalytic activity in catalysis.

This sequence belongs to the prokaryotic AdoMetDC family. Type 1 subfamily. In terms of assembly, heterotetramer of two alpha and two beta chains arranged as a dimer of alpha/beta heterodimers. Requires pyruvate as cofactor. Post-translationally, is synthesized initially as an inactive proenzyme. Formation of the active enzyme involves a self-maturation process in which the active site pyruvoyl group is generated from an internal serine residue via an autocatalytic post-translational modification. Two non-identical subunits are generated from the proenzyme in this reaction, and the pyruvate is formed at the N-terminus of the alpha chain, which is derived from the carboxyl end of the proenzyme. The post-translation cleavage follows an unusual pathway, termed non-hydrolytic serinolysis, in which the side chain hydroxyl group of the serine supplies its oxygen atom to form the C-terminus of the beta chain, while the remainder of the serine residue undergoes an oxidative deamination to produce ammonia and the pyruvoyl group blocking the N-terminus of the alpha chain.

The enzyme catalyses S-adenosyl-L-methionine + H(+) = S-adenosyl 3-(methylsulfanyl)propylamine + CO2. It participates in amine and polyamine biosynthesis; S-adenosylmethioninamine biosynthesis; S-adenosylmethioninamine from S-adenosyl-L-methionine: step 1/1. Functionally, catalyzes the decarboxylation of S-adenosylmethionine to S-adenosylmethioninamine (dcAdoMet), the propylamine donor required for the synthesis of the polyamines spermine and spermidine from the diamine putrescine. This is S-adenosylmethionine decarboxylase proenzyme 2 from Bacillus cereus (strain ATCC 14579 / DSM 31 / CCUG 7414 / JCM 2152 / NBRC 15305 / NCIMB 9373 / NCTC 2599 / NRRL B-3711).